The chain runs to 537 residues: Extracellular exo-inulinase inuE (537 aa).

Positions 1–19 (MARLLKAVTVCALAGIAHA) are cleaved as a signal peptide. Residue aspartate 41 is part of the active site. N-linked (GlcNAc...) asparagine glycans are attached at residues asparagine 49, asparagine 67, asparagine 112, asparagine 300, asparagine 363, asparagine 398, asparagine 430, and asparagine 531.

Belongs to the glycosyl hydrolase 32 family.

Its subcellular location is the secreted. It catalyses the reaction Hydrolysis of terminal, non-reducing (2-&gt;1)- and (2-&gt;6)-linked beta-D-fructofuranose residues in fructans.. In terms of biological role, exo-inulinase involved in utilization of the plant storage polymer inulin, consisting of fructooligosaccharides with a degree of polymerization (DP) value from 2 to 60. Splits off terminal fructose units successively from the non-reducing end of the inulin molecule, and also hydrolyze sucrose and raffinose. The protein is Extracellular exo-inulinase inuE (inuE) of Aspergillus niger (strain ATCC MYA-4892 / CBS 513.88 / FGSC A1513).